The following is a 185-amino-acid chain: Large ribosomal subunit protein uL5 (185 aa).

The protein belongs to the universal ribosomal protein uL5 family. Part of the 50S ribosomal subunit; part of the 5S rRNA/L5/L18/L25 subcomplex. Contacts the 5S rRNA and the P site tRNA. Forms a bridge to the 30S subunit in the 70S ribosome.

In terms of biological role, this is one of the proteins that bind and probably mediate the attachment of the 5S RNA into the large ribosomal subunit, where it forms part of the central protuberance. In the 70S ribosome it contacts protein S13 of the 30S subunit (bridge B1b), connecting the 2 subunits; this bridge is implicated in subunit movement. Contacts the P site tRNA; the 5S rRNA and some of its associated proteins might help stabilize positioning of ribosome-bound tRNAs. The chain is Large ribosomal subunit protein uL5 from Brucella abortus (strain 2308).